Here is a 956-residue protein sequence, read N- to C-terminus: Valine--tRNA ligase (956 aa).

A 'HIGH' region motif is present at residues 43 to 53 (PNITGNLHIGH). The 'KMSKS' region motif lies at 556-560 (KMSKS). Lys559 is a binding site for ATP. Positions 889–920 (PKEKELKNLNKEISKIQLAINKLQQRLSNEEF) form a coiled coil.

The protein belongs to the class-I aminoacyl-tRNA synthetase family. ValS type 1 subfamily. As to quaternary structure, monomer.

Its subcellular location is the cytoplasm. It catalyses the reaction tRNA(Val) + L-valine + ATP = L-valyl-tRNA(Val) + AMP + diphosphate. Catalyzes the attachment of valine to tRNA(Val). As ValRS can inadvertently accommodate and process structurally similar amino acids such as threonine, to avoid such errors, it has a 'posttransfer' editing activity that hydrolyzes mischarged Thr-tRNA(Val) in a tRNA-dependent manner. The polypeptide is Valine--tRNA ligase (Buchnera aphidicola subsp. Baizongia pistaciae (strain Bp)).